The chain runs to 814 residues: ATP-dependent RNA helicase dbp-7 (814 aa).

The tract at residues 26-102 (GGRWRDRVKA…PPPPPTHAMK (77 aa)) is disordered. 2 stretches are compositionally biased toward basic and acidic residues: residues 28–42 (RWRDRVKAQKGEKGG) and 69–78 (QRTEDGDSGR). A Q motif motif is present at residues 145–174 (ENFLSLGLSRRVSQHLATKLEMKAPTAIQK). One can recognise a Helicase ATP-binding domain in the interval 178 to 384 (PQLVKEDSDA…EISLEDAVHI (207 aa)). 191-198 (AETGSGKT) contributes to the ATP binding site. Residues 313–316 (DEGD) carry the DEAD box motif. The 201-residue stretch at 422–622 (RLVTLIALLK…GFATNINVPG (201 aa)) folds into the Helicase C-terminal domain. Disordered regions lie at residues 464–483 (TPRAEPEPKPEGEAPTKPNI), 662–695 (ESKSEKFAASKQGKKGKKDAKKDENKTPDNPLLV), and 741–795 (GIGG…AGRR). Residues 467–477 (AEPEPKPEGEA) show a composition bias toward basic and acidic residues. Acidic residues predominate over residues 779-790 (DDDERDFGAADE).

This sequence belongs to the DEAD box helicase family. DDX31/DBP7 subfamily.

Its subcellular location is the nucleus. The protein localises to the nucleolus. The enzyme catalyses ATP + H2O = ADP + phosphate + H(+). In terms of biological role, ATP-binding RNA helicase involved in the biogenesis of 60S ribosomal subunits and is required for the normal formation of 25S and 5.8S rRNAs. The chain is ATP-dependent RNA helicase dbp-7 (dbp-7) from Neurospora crassa (strain ATCC 24698 / 74-OR23-1A / CBS 708.71 / DSM 1257 / FGSC 987).